The sequence spans 155 residues: Ribosome maturation factor RimP (155 aa).

It belongs to the RimP family.

It is found in the cytoplasm. Required for maturation of 30S ribosomal subunits. In Bacteroides thetaiotaomicron (strain ATCC 29148 / DSM 2079 / JCM 5827 / CCUG 10774 / NCTC 10582 / VPI-5482 / E50), this protein is Ribosome maturation factor RimP.